The following is a 183-amino-acid chain: uncharacterized protein (183 aa).

Positions 1 to 182 constitute a Macro domain; it reads MIKVVKGDIT…KALKIVGQGG (182 aa).

This is an uncharacterized protein from Pyrococcus furiosus (strain ATCC 43587 / DSM 3638 / JCM 8422 / Vc1).